The following is a 222-amino-acid chain: 2-C-methyl-D-erythritol 4-phosphate cytidylyltransferase (222 aa).

This sequence belongs to the IspD/TarI cytidylyltransferase family. IspD subfamily.

The enzyme catalyses 2-C-methyl-D-erythritol 4-phosphate + CTP + H(+) = 4-CDP-2-C-methyl-D-erythritol + diphosphate. It functions in the pathway isoprenoid biosynthesis; isopentenyl diphosphate biosynthesis via DXP pathway; isopentenyl diphosphate from 1-deoxy-D-xylulose 5-phosphate: step 2/6. Catalyzes the formation of 4-diphosphocytidyl-2-C-methyl-D-erythritol from CTP and 2-C-methyl-D-erythritol 4-phosphate (MEP). In Thermotoga petrophila (strain ATCC BAA-488 / DSM 13995 / JCM 10881 / RKU-1), this protein is 2-C-methyl-D-erythritol 4-phosphate cytidylyltransferase.